The following is a 924-amino-acid chain: Isoleucine--tRNA ligase (924 aa).

The 'HIGH' region motif lies at 57–67 (PYANGDIHMGH). Residue Glu552 participates in L-isoleucyl-5'-AMP binding. Positions 593–597 (KMSKS) match the 'KMSKS' region motif. ATP is bound at residue Lys596. Zn(2+) is bound by residues Cys891, Cys894, Cys911, and Cys914.

The protein belongs to the class-I aminoacyl-tRNA synthetase family. IleS type 1 subfamily. As to quaternary structure, monomer. Zn(2+) serves as cofactor.

It localises to the cytoplasm. It catalyses the reaction tRNA(Ile) + L-isoleucine + ATP = L-isoleucyl-tRNA(Ile) + AMP + diphosphate. In terms of biological role, catalyzes the attachment of isoleucine to tRNA(Ile). As IleRS can inadvertently accommodate and process structurally similar amino acids such as valine, to avoid such errors it has two additional distinct tRNA(Ile)-dependent editing activities. One activity is designated as 'pretransfer' editing and involves the hydrolysis of activated Val-AMP. The other activity is designated 'posttransfer' editing and involves deacylation of mischarged Val-tRNA(Ile). In Geobacillus kaustophilus (strain HTA426), this protein is Isoleucine--tRNA ligase.